The primary structure comprises 451 residues: 23S rRNA (uracil(1939)-C(5))-methyltransferase RlmD (451 aa).

The disordered stretch occupies residues 1-21 (MAKHERGLRFQPTGGVKSVQI). The 59-residue stretch at 20-78 (QIPAGKKQRLSIERLSDDGRGIAFLEGKTWFVAGSLAGEEVEARVLNARGKVVEARTER) folds into the TRAM domain. The [4Fe-4S] cluster site is built by C91, C97, C100, and C179. Residues Q283, F312, N317, E333, D360, and D381 each coordinate S-adenosyl-L-methionine. The Nucleophile role is filled by C407.

This sequence belongs to the class I-like SAM-binding methyltransferase superfamily. RNA M5U methyltransferase family. RlmD subfamily.

It catalyses the reaction uridine(1939) in 23S rRNA + S-adenosyl-L-methionine = 5-methyluridine(1939) in 23S rRNA + S-adenosyl-L-homocysteine + H(+). Its function is as follows. Catalyzes the formation of 5-methyl-uridine at position 1939 (m5U1939) in 23S rRNA. This chain is 23S rRNA (uracil(1939)-C(5))-methyltransferase RlmD, found in Pseudomonas syringae pv. tomato (strain ATCC BAA-871 / DC3000).